A 354-amino-acid chain; its full sequence is Guanine nucleotide-binding protein G(i) subunit alpha-3 (354 aa).

G2 is lipidated: N-myristoyl glycine. C3 is lipidated: S-palmitoyl cysteine. The region spanning 32–354 is the G-alpha domain; that stretch reads KEVKLLLLGA…KNNLKECGLY (323 aa). The G1 motif stretch occupies residues 35–48; it reads KLLLLGAGESGKST. Residues G42, E43, S44, G45, K46, S47, T48, D150, S151, L175, R176, T177, R178, V179, K180, T181, V201, G203, N269, K270, D272, L273, C325, A326, and T327 each contribute to the GTP site. Position 47 (S47) interacts with Mg(2+). The segment at 173-181 is G2 motif; it reads DVLRTRVKT. T181 is a binding site for Mg(2+). The G3 motif stretch occupies residues 196–205; sequence FKMFDVGGQR. Residues 265-272 form a G4 motif region; it reads ILFLNKKD. Residues 324-329 are G5 motif; sequence TCATDT.

It belongs to the G-alpha family. G(i/o/t/z) subfamily. As to quaternary structure, heterotrimeric G proteins are composed of 3 units; alpha, beta and gamma. The alpha subunit contains the guanine nucleotide binding site. GTP binding causes dissociation of the heterotrimer, liberating the individual subunits so that they can interact with downstream effector proteins. Forms a complex with CCDC88A/GIV and EGFR which leads to enhanced EGFR signaling and triggering of cell migration; ligand stimulation is required for recruitment of GNAI3 to the complex. Interacts (inactive GDP-bound form) with CCDC88A/GIV (via GBA motif); the interaction leads to activation of GNAI3. Interacts (inactive GDP-bound form) with CCDC88C/DAPLE (via GBA motif); the interaction leads to activation of GNAI3. Interacts (inactive GDP-bound form) with NUCB1 (via GBA motif) and NUCB2 (via GBA motif); the interaction leads to activation of GNAI3. Interacts (inactive GDP-bound form) with PLCD4 (via GBA motif); the interaction leads to activation of GNAI3. Interacts with INSR; the interaction is probably mediated by CCDC88A/GIV. Interacts with GPSM1. Interacts (GDP-bound form) with GPSM2 (via GoLoco domains). Does not interact with RGS2. Interacts with RGS8 and RGS10; this strongly enhances the intrinsic GTPase activity. Interacts with RGS16; this strongly enhances the intrinsic GTPase activity. Interacts with RGS12. Interacts (via active GTP- or inactive GDP-bound form) with RGS14. Interacts (via active GTP-bound form) with TRPC5 (via ANK repeats) in a homotetrameric ion channel; the interaction is direct and activates the channel activity. In terms of tissue distribution, ubiquitously expressed.

Its subcellular location is the cytoplasm. It is found in the cell membrane. The protein resides in the cytoskeleton. It localises to the microtubule organizing center. The protein localises to the centrosome. Functionally, heterotrimeric guanine nucleotide-binding proteins (G proteins) function as transducers downstream of G protein-coupled receptors (GPCRs) in numerous signaling cascades. The alpha chain contains the guanine nucleotide binding site and alternates between an active, GTP-bound state and an inactive, GDP-bound state. Signaling by an activated GPCR promotes GDP release and GTP binding. The alpha subunit has a low GTPase activity that converts bound GTP to GDP, thereby terminating the signal. Both GDP release and GTP hydrolysis are modulated by numerous regulatory proteins. Signaling is mediated via effector proteins, such as adenylate cyclase. Inhibits adenylate cyclase activity, leading to decreased intracellular cAMP levels. Stimulates the activity of receptor-regulated K(+) channels. The active GTP-bound form prevents the association of RGS14 with centrosomes and is required for the translocation of RGS14 from the cytoplasm to the plasma membrane. May play a role in cell division. The active GTP-bound form activates the calcium permeant TRPC5 ion channels. In Cavia porcellus (Guinea pig), this protein is Guanine nucleotide-binding protein G(i) subunit alpha-3 (GNAI3).